The primary structure comprises 288 residues: Energy-coupling factor transporter ATP-binding protein EcfA2 (288 aa).

One can recognise an ABC transporter domain in the interval 3 to 246; sequence IKLEQLGYCY…PDELVDLGLS (244 aa). Residue 40–47 participates in ATP binding; that stretch reads GHTGSGKS.

It belongs to the ABC transporter superfamily. Energy-coupling factor EcfA family. Forms a stable energy-coupling factor (ECF) transporter complex composed of 2 membrane-embedded substrate-binding proteins (S component), 2 ATP-binding proteins (A component) and 2 transmembrane proteins (T component).

It localises to the cell membrane. Its function is as follows. ATP-binding (A) component of a common energy-coupling factor (ECF) ABC-transporter complex. Unlike classic ABC transporters this ECF transporter provides the energy necessary to transport a number of different substrates. The chain is Energy-coupling factor transporter ATP-binding protein EcfA2 from Listeria innocua serovar 6a (strain ATCC BAA-680 / CLIP 11262).